The sequence spans 496 residues: Genome polyprotein (496 aa).

The Extracellular portion of the chain corresponds to 1-447; sequence SRCTHLENRD…HTVLGGAFNS (447 aa). 6 disulfides stabilise this stretch: Cys-3-Cys-30, Cys-60-Cys-116, Cys-60-Cys-121, Cys-74-Cys-105, Cys-92-Cys-116, and Cys-92-Cys-121. The fusion peptide stretch occupies residues 98-111; sequence DRGWGNHCGLFGKG. A glycan (N-linked (GlcNAc...) asparagine; by host) is linked at Asn-154. Disulfide bonds link Cys-186-Cys-290 and Cys-307-Cys-338. Residues 448–468 form a helical membrane-spanning segment; it reads IFGGVGFLPKLLMGVALAWLG. Residues 469–479 lie on the Cytoplasmic side of the membrane; sequence LNTRNPTMSMS. A helical transmembrane segment spans residues 480–496; it reads FLMAGGLVLAMTLGVGA.

In terms of assembly, homodimer; in the endoplasmic reticulum and Golgi. N-glycosylated.

The protein localises to the virion membrane. It is found in the host endoplasmic reticulum membrane. Binds to host cell surface receptor and mediates fusion between viral and cellular membranes. Envelope protein is synthesized in the endoplasmic reticulum in the form of heterodimer with protein prM. They play a role in virion budding in the ER, and the newly formed immature particle is covered with 60 spikes composed of heterodimer between precursor prM and envelope protein E. The virion is transported to the Golgi apparatus where the low pH causes dissociation of PrM-E heterodimers and formation of E homodimers. prM-E cleavage is ineficient, and many virions are only partially matured. These uncleaved prM would play a role in immune evasion. This chain is Genome polyprotein, found in Bos taurus (Bovine).